We begin with the raw amino-acid sequence, 379 residues long: Homoserine O-acetyltransferase (379 aa).

In terms of domain architecture, AB hydrolase-1 spans 54 to 332 (NAILVCHALS…PYQSEEIVKS (279 aa)). Catalysis depends on S159, which acts as the Nucleophile. R228 contributes to the substrate binding site. Residues D318 and H352 contribute to the active site. D353 contacts substrate.

Belongs to the AB hydrolase superfamily. MetX family. In terms of assembly, homodimer.

The protein resides in the cytoplasm. The enzyme catalyses L-homoserine + acetyl-CoA = O-acetyl-L-homoserine + CoA. It participates in amino-acid biosynthesis; L-methionine biosynthesis via de novo pathway; O-acetyl-L-homoserine from L-homoserine: step 1/1. Transfers an acetyl group from acetyl-CoA to L-homoserine, forming acetyl-L-homoserine. The sequence is that of Homoserine O-acetyltransferase from Leptospira meyeri.